Consider the following 272-residue polypeptide: Cyclase-like protein 2 (272 aa).

An N-terminal signal peptide occupies residues 1 to 24 (MAVPPLFFLLTLLSLPSLLISAGA).

The protein belongs to the Cyclase 1 superfamily.

Its subcellular location is the secreted. It localises to the extracellular space. It is found in the extracellular matrix. Its function is as follows. May function redundantly with CYCLASE1 for normal plant growth, development and viability. In Arabidopsis thaliana (Mouse-ear cress), this protein is Cyclase-like protein 2.